Here is a 55-residue protein sequence, read N- to C-terminus: Large ribosomal subunit protein bL33 (55 aa).

This sequence belongs to the bacterial ribosomal protein bL33 family.

The polypeptide is Large ribosomal subunit protein bL33 (Leifsonia xyli subsp. xyli (strain CTCB07)).